The following is a 516-amino-acid chain: Katanin p60 ATPase-containing subunit A1 (516 aa).

Residues 75 to 212 are disordered; sequence GFKSEPAAPE…DEKKFDPAGY (138 aa). 2 stretches are compositionally biased toward basic and acidic residues: residues 133 to 143 and 155 to 167; these read ARKDPPRRSEP and RGGR…RGDA. Residues 168–178 show a composition bias toward gly residues; sequence RSGGGGRGGAR. Residues 179 to 212 are compositionally biased toward basic and acidic residues; sequence GSDKDKNRGGKSDKDKKAPSGEEGDEKKFDPAGY. 274-281 is a binding site for ATP; sequence GPPGTGKT.

It belongs to the AAA ATPase family. Katanin p60 subunit A1 subfamily. As to quaternary structure, can homooligomerize into hexameric rings, which may be promoted by interaction with microtubules. Interacts with KATNB1, which may serve as a targeting subunit.

Its subcellular location is the cytoplasm. It is found in the cytoskeleton. It localises to the microtubule organizing center. The protein resides in the centrosome. The protein localises to the spindle pole. It catalyses the reaction n ATP + n H2O + a microtubule = n ADP + n phosphate + (n+1) alpha/beta tubulin heterodimers.. With respect to regulation, ATPase activity is stimulated by microtubules, which promote homooligomerization. ATP-dependent microtubule severing is stimulated by interaction with KATNB1. Catalytic subunit of a complex which severs microtubules in an ATP-dependent manner. Microtubule severing may promote rapid reorganization of cellular microtubule arrays and the release of microtubules from the centrosome following nucleation. In mitotic spindles this could allow depolymerization of the microtubule end proximal to the centrosome, and subsequent poleward microtubule flux. This is Katanin p60 ATPase-containing subunit A1 from Strongylocentrotus purpuratus (Purple sea urchin).